Here is a 741-residue protein sequence, read N- to C-terminus: NAD(P)H-quinone oxidoreductase subunit 5, chloroplastic (741 aa).

16 consecutive transmembrane segments (helical) span residues 9-29 (WVIPLLPLPVILSMGFGLFLI), 39-59 (IWAFPSVLLLSIAMVFSVQLS), 89-109 (IDPLTSIMLMLITTVGILVLI), 125-145 (FIYISFFNISMLGLVTSSNLI), 147-167 (IYFFWELVGMCSYLLIGFWFT), 184-204 (IGDFGLLLGILGFFWITGSLE), 216-238 (IPNNGTTSLLTTLCAFLLFLGAV), 258-278 (TPISALIHAATMVAAGIFLLA), 280-300 (LLPLFISLPLIMTFISLVGTI), 327-347 (LGYMMLALGIGSYQAALFHLI), 354-374 (ALLFLGSGSIIHSMEPLVGYS), 396-416 (TAFLWGTLSICGIPPLACFWS), 425-445 (WLYSPFFGIIASFTAGLTAFY), 544-564 (LFPLLILLLFTFFIGFIGIPF), 612-632 (SLVILGLFIAYIFYGSAYSFF), and 721-741 (ISSYLFFFLCYVSVFLFFFLS).

This sequence belongs to the complex I subunit 5 family. NDH is composed of at least 16 different subunits, 5 of which are encoded in the nucleus.

It is found in the plastid. The protein localises to the chloroplast thylakoid membrane. The catalysed reaction is a plastoquinone + NADH + (n+1) H(+)(in) = a plastoquinol + NAD(+) + n H(+)(out). The enzyme catalyses a plastoquinone + NADPH + (n+1) H(+)(in) = a plastoquinol + NADP(+) + n H(+)(out). Functionally, NDH shuttles electrons from NAD(P)H:plastoquinone, via FMN and iron-sulfur (Fe-S) centers, to quinones in the photosynthetic chain and possibly in a chloroplast respiratory chain. The immediate electron acceptor for the enzyme in this species is believed to be plastoquinone. Couples the redox reaction to proton translocation, and thus conserves the redox energy in a proton gradient. This is NAD(P)H-quinone oxidoreductase subunit 5, chloroplastic (ndhF) from Brachypodium distachyon (Purple false brome).